A 479-amino-acid chain; its full sequence is Chromosomal replication initiator protein DnaA (479 aa).

The segment at 1 to 71 is domain I, interacts with DnaA modulators; the sequence is MNLTQIWKAT…RNALARVVGY (71 aa). The interval 71–138 is domain II; it reads YPVQVQVLIA…LDLASAMRSG (68 aa). The segment covering 86-99 has biased composition (polar residues); that stretch reads TEPSPSLTLSNGSR. Residues 86–106 are disordered; the sequence is TEPSPSLTLSNGSRLMSDPEP. A domain III, AAA+ region region spans residues 139-355; it reads MLNPRYTFSS…GSLNRVAAYA (217 aa). ATP-binding residues include Gly183, Gly185, Lys186, and Thr187. The domain IV, binds dsDNA stretch occupies residues 356-479; sequence ELNRAPITIE…IRERIQMLRG (124 aa).

It belongs to the DnaA family. In terms of assembly, oligomerizes as a right-handed, spiral filament on DNA at oriC.

Its subcellular location is the cytoplasm. Plays an essential role in the initiation and regulation of chromosomal replication. ATP-DnaA binds to the origin of replication (oriC) to initiate formation of the DNA replication initiation complex once per cell cycle. Binds the DnaA box (a 9 base pair repeat at the origin) and separates the double-stranded (ds)DNA. Forms a right-handed helical filament on oriC DNA; dsDNA binds to the exterior of the filament while single-stranded (ss)DNA is stabiized in the filament's interior. The ATP-DnaA-oriC complex binds and stabilizes one strand of the AT-rich DNA unwinding element (DUE), permitting loading of DNA polymerase. After initiation quickly degrades to an ADP-DnaA complex that is not apt for DNA replication. Binds acidic phospholipids. This Chloroflexus aurantiacus (strain ATCC 29366 / DSM 635 / J-10-fl) protein is Chromosomal replication initiator protein DnaA.